We begin with the raw amino-acid sequence, 363 residues long: Histidinol-phosphate aminotransferase (363 aa).

Residue Lys-215 is modified to N6-(pyridoxal phosphate)lysine.

This sequence belongs to the class-II pyridoxal-phosphate-dependent aminotransferase family. Histidinol-phosphate aminotransferase subfamily. Homodimer. Pyridoxal 5'-phosphate is required as a cofactor.

The catalysed reaction is L-histidinol phosphate + 2-oxoglutarate = 3-(imidazol-4-yl)-2-oxopropyl phosphate + L-glutamate. Its pathway is amino-acid biosynthesis; L-histidine biosynthesis; L-histidine from 5-phospho-alpha-D-ribose 1-diphosphate: step 7/9. This is Histidinol-phosphate aminotransferase from Buchnera aphidicola subsp. Diuraphis noxia.